The primary structure comprises 325 residues: DNA-directed RNA polymerase subunit alpha (325 aa).

Residues 1-231 form an alpha N-terminal domain (alpha-NTD) region; sequence MQTSLLKPKI…DQLSVFAALE (231 aa). The alpha C-terminal domain (alpha-CTD) stretch occupies residues 246–325; sequence IDPILLRPVD…ENWPPAGLDK (80 aa).

The protein belongs to the RNA polymerase alpha chain family. In terms of assembly, homodimer. The RNAP catalytic core consists of 2 alpha, 1 beta, 1 beta' and 1 omega subunit. When a sigma factor is associated with the core the holoenzyme is formed, which can initiate transcription.

It catalyses the reaction RNA(n) + a ribonucleoside 5'-triphosphate = RNA(n+1) + diphosphate. Its function is as follows. DNA-dependent RNA polymerase catalyzes the transcription of DNA into RNA using the four ribonucleoside triphosphates as substrates. This chain is DNA-directed RNA polymerase subunit alpha, found in Burkholderia thailandensis (strain ATCC 700388 / DSM 13276 / CCUG 48851 / CIP 106301 / E264).